Consider the following 83-residue polypeptide: Putative defensin-like protein 67 (83 aa).

The first 24 residues, 1–24 (MGSSKLMVTCIVVAMLTISCDILS), serve as a signal peptide directing secretion. 4 cysteine pairs are disulfide-bonded: Cys38–Cys82, Cys42–Cys65, Cys51–Cys80, and Cys55–Cys81.

The protein belongs to the DEFL family.

It localises to the secreted. The polypeptide is Putative defensin-like protein 67 (Arabidopsis thaliana (Mouse-ear cress)).